A 189-amino-acid polypeptide reads, in one-letter code: Vacuolar iron transporter homolog 2 (189 aa).

Over Met-1–Ala-10 the chain is Cytoplasmic. Residues Val-11 to Val-31 traverse the membrane as a helical segment. The Vacuolar portion of the chain corresponds to Asn-32–Met-38. The helical transmembrane segment at Leu-39 to Val-59 threads the bilayer. Topologically, residues Ser-60–Ala-97 are cytoplasmic. The chain crosses the membrane as a helical span at residues Phe-98–Ile-118. At Lys-119–Arg-124 the chain is on the vacuolar side. Residues Val-125 to Tyr-145 form a helical membrane-spanning segment. The Cytoplasmic segment spans residues Leu-146–Leu-159. Residues Leu-160–Phe-180 form a helical membrane-spanning segment. Residues His-181–Ala-189 are Vacuolar-facing.

The protein belongs to the CCC1 family.

It localises to the vacuole membrane. The catalysed reaction is Fe(2+)(in) = Fe(2+)(out). In terms of biological role, probable vacuolar iron transporter that may be involved in the regulation of iron distribution throughout the plant. The chain is Vacuolar iron transporter homolog 2 from Oryza sativa subsp. japonica (Rice).